The primary structure comprises 189 residues: RPW8-like protein 1 (189 aa).

One can recognise an RPW8 domain in the interval Met-1–Glu-153. Residues Leu-7 to Ile-24 traverse the membrane as a helical segment. 2 coiled-coil regions span residues Phe-65–Arg-92 and Asp-126–Gln-147. A glycan (N-linked (GlcNAc...) asparagine) is linked at Asn-177.

The protein belongs to the plant RPW8 protein family.

It localises to the membrane. Its function is as follows. Probable disease resistance (R) protein. The sequence is that of RPW8-like protein 1 from Arabidopsis thaliana (Mouse-ear cress).